The primary structure comprises 423 residues: MTLQAAPRSAAAQQREPDLRQEVHDAARRARVAARLLAVVPTGVKDRALHAAADAILAHVDRILSANAEDLDAARAADTPAAMLDRLALNPQRVDGIAAGLRQVAGLPGPVGEVLRGYTLPNGLQLRQQRVPLGVVGMIYEGRPNVTVDAFGLTLKSGNAALLRGSSSAARSNEALVNVLRSALDSEQLPADAVQLLSSADRSTVTHLIQARGLVDVAIPRGGAGLIDAVVRDAQVPTIETGVGNCHVYVHEAADLDVAERILLNSKTRRPSVCNAAETLLVDAAIAEHAMPRLIGALQDAGVTVHLDADEQDLRREYLAMEIAVAVVDGVDGAIAHINEYGTGHTEAIVTTNLAAAQRFTERIDAAAVMVNASTAFTDGEQFGFGAEIGISTQKLHARGPMGLPELTSTKWIVRGEGHTRPA.

The span at 1–14 shows a compositional bias: low complexity; the sequence is MTLQAAPRSAAAQQ. Residues 1-25 are disordered; that stretch reads MTLQAAPRSAAAQQREPDLRQEVHD. Positions 15–25 are enriched in basic and acidic residues; that stretch reads REPDLRQEVHD.

It belongs to the gamma-glutamyl phosphate reductase family.

It localises to the cytoplasm. The catalysed reaction is L-glutamate 5-semialdehyde + phosphate + NADP(+) = L-glutamyl 5-phosphate + NADPH + H(+). The protein operates within amino-acid biosynthesis; L-proline biosynthesis; L-glutamate 5-semialdehyde from L-glutamate: step 2/2. Functionally, catalyzes the NADPH-dependent reduction of L-glutamate 5-phosphate into L-glutamate 5-semialdehyde and phosphate. The product spontaneously undergoes cyclization to form 1-pyrroline-5-carboxylate. The sequence is that of Gamma-glutamyl phosphate reductase from Mycobacterium ulcerans (strain Agy99).